The following is a 6793-amino-acid chain: MASNHISLAFANDEEISAIGFGSVEEAVSYYSDAAVNGFDQCRFVSLGLQDAVVGVEDDDVVMLITGVTQLRAYLGTFGDRPLNLRGWLLFSNCNYFLEELDLVFGRCGGTTIPVDQFMCGADGAPVIQEGDWTFMDYFQDSNQFTLNGITYVKAWDVDRKPNDYAKQNVTCIRRITYITDHRHVLADGTTMKTARHPKVNKSVVLDSPFDQIYKEVGSPFMGNGSTFVEMLKDPAFFHALITCECGRSEWTVGDWKGYNSLCCNIKCKPITIVTPKAVPGAVVITKAGIGAGLKCYNNVFLKHIIDLVVPGTNLGWGVWRIAKVQSKDDVATSGNVLVDDPEDRLDPCYFGNDGPFATKFKFQLLANSFDDEVKGAIVQGVVHVNTAICDVVKDILGLPWFVKKLGSLVTVMWDQFVAGVQSMKICTLKVVQLAKALSCATMSVVKGVITLVAEVPEIFKRLFYTLTSALKSLCTSSCDALVVAGKSFAKIGDYVLLPSALVRLVSSKVKGKAQSGIKQLQFATVVLGDTHKVESDRVEFSSVNLKMVDEEFPLNPVGHTVAVGNQAFFCSDGLYRFMADRDLVITSPIFKPELELEPIFECDAIPGFPKVAASNVAELCVKVDTLLFNYDKIYKKYSTIIKGDRCYIQCTHTFKAPSYYFDDDEFVELCTKYYKLPDFDAFYNAVHAATDMDQFCALCTSGFEVFIPRVPDCPPILNDIDGGSIWTSFILSVRSATDFIKTLKIDLGLNGVVVFVTKKFRKAGALLQKLYNAFLDTVTSFIKVAGVAFKYCATCVPKIVINGCYHTVTRLFAKDLQIPTEDGVADFNTFNHCVFPVNPTRIETDSLELEEVDFVEPGVDGKLVILDDYSFYSDGTNYYPSDGKGVVASCFKKKGGGVVTISDEVQVRTIDPVYKVRLEYEFEDETLVKVCEKAIGTKLKVTGDWSNLLETLEKAMDVVRQHLDVPDYFVYDEEGGTDLNLTIMVSQWPLSSDSEDDFKAVDDEPNANTDETVDTFAEDVAETQNVQQDVTQDEVEAVCDLVVKATEEGPIEHEELSEDQKEVQQALAFIEDKPVVVKPDVFAFSYASYGGLKVLNQSSNNCWVSSALVQLQLTGLLDSDEMQLFNAGRVSPMVKRCYESQRAIFGSLGDVSACLESLLKDRDGMSITCTIDCGCGPGVRVYENAIFRFTPLKTAFPMGRCLICSKTLMHTITQMKGTGIFCRDATALDVDTLVVKPLCAAVYVGAQDGGHYLTNMYDANMAVDGHGRHPIKFNTINTLCYKDVDWEVSNGSCDVKPFLTYKNIEFYQGELSALLSVNHDFVVNAANEQLSHGGGIAKALDDLTKGELQVLSNQYVSRNGSIKVGSGVLIKCKEHSILNVVGPRKGKHAAELLTKAYTFVFKQKGVPLMPLLSVGIFKVPITESLAAFLACVGDRVCKCFCYTDKERLAIQNFVTSFQTEQPVEPLPVIQEVKGVQLEKPVPDVKVENPCEPFRIEGDAKFYDLTPSMVQSLQVTRLVSFTNSDLCLGSFVRDCDGYVQGSLGGAIANYKKSNPVLPAGNCVTLKCDGFISFTFVILPKEGDTNYEKNFNRAIAKFLKLKGSLLVVVEDSSVFNKISHASVAGYVAKPALVDTLFEAKPVQVVVTQDQRSFHTVELSTSQTYGQQLGDCVVEDKKVTNLKPVSKDKVVSVVPNVDWDKHYGFVDAGIFHTLDHTMFVFDNNVVNGKRVLRTSDNNCWINAVCLQLQFANAKFKPKGLQQLWESYCTGDVAMFVHWLYWITGVEKGEPSDAENTLNIISRFLKPQGSVEMLRATSTTCDGTCSTKRVVSTPVVNASVLKVGLDDGNCVHGLPLVDRVVSVNGTVIITNVGDTPGKPVVATENLLLDGVSYTVFQDSTTGVGHYTVFDKEAKLMFDGDVLKPCDLNVSPVTSVVVCNNKKIVVQDPVKRVELDASKFLDTMNVASEKFFTFGDFVSRNIIVLIVYLFSLLAICFRALKKRDMKVMAGVPERTGIILKRSVKYNYKALKFFFRLKFQYIKVFLKFSLVLYTLYALMFMFIRFTPVGTPICKRYTDGYANSTFDKNDYCGNVLCKICLYGYEELSDFTHTRVIWQHLKDPLIGNILPLFYLVFLIIFGGFFVRIGITYFIMQYINAAGVALGYQDNVWLLHLLPFNSMGNIIVVAFIVTRILLFLKHVLFGCDKPSCIACSKSAKLTRVPLQTILQGVTKSFYVNANGGKKFCKKHNFFCVDCDSYGYGCTFINDVIAPELSNVTKLNVIPTGPATIIIDKVEFSNGFYYLYSGSTFWKYNFDITEAKYACKDVLKNCNILTDFVVFNNSGSNVTQVKNACVYFSQLLCKPIKLVDSALLASLNVDFSANLHKAFVEVLSNSFGKDLSNCSNMNECRESLGLSDVPEEEFSAAVSEAHRYDVLISDVSFNNLIVSYAKPEEKLAVHDIANCMRVGAKVVNHNVLTKDNVPVVWLAKDFIALSEEARKYIVRTTKTKGINFMLTFNDRRMHLTIPTISVANKKGAGLPSLFTRLYSFFWHLCVLIVVLFVATSLLDFSAQVTSDTQYDFKYIENGVLKVFEKPLDCVHNAFVNFNEWHNAKFGSIPTNSRRCPIVVGTSDEVRYIPGVPAGVFLYGKSLIFAMSTIFGTSGLCFDDRGLTDPDSCIFNSACTTLSGIGGRNVYCYREGVVDNAKLYSSLLPHSYYRLMDGNHIVLPEIITRGFGIRTIKTQAMTYCRTGECIDSQAGVCVGLDRFFVYSKTPGSDYVCGTGFFSLLFNVIGMFSNSIPVTVMSGQILLNCVVAFTAVMACFAFTKFKRLFGDMSFGVLSVGLCTVVNNLSYVVTQNSIGMLAYATLYFLCTKGVRYSWVWHVGFAISYCFLAPWWVVLAYLICALLEFLPNLFKLKVSTQLFEGDKFVGSFESAASGTFVLDMHSYQKLANSISTEKLKQYCASYNRYKYYSGSASEADYRLACFAHLAKAMSDFANDHMDKLYTPPTVSYNSTLQAGLRKMAQPSGIVEGCIVRVSYGNLTLNGLWLGDTVICPRHVIASNTTNVIDYDHAMSLVRLHNFSISSGNMFLGVISASMRGTLLHIKVNQSNVNTPNYTYKVLKPGDSFNILACYDGSAAGVYGVNMRTNYTIRGSFISGACGSPGYNINNGVVEFCYMHHLELGSGCHVGSDMDGTMYGKYEDQPTLQIEGASNLVTENVCSWLYGALINGDRWWLSSVSVGVDTYNEWALRNGMTALKNVDCFSLLVAKTGVDVGRLLASIQKLHGNFGGKSILGCTSLCDEFTLSEVVKQMYGVTLQSGKVSRAFRNASIVCCLLFLFLSEMLNHSKLFWINPGYITPVFLAIIVASSALMLLVKHKLLFLQLYLLPSLCIVSGYNIFKDYHFYTYMLEEFDYKVPFGGFNVTGVLNISLCCFVMGLHTFRFLQTPNKIFSYVVAVLTVLYTYYYSTDVLGLILTSMSGFTNYWFIGTATYKLATYVLPHTSLLDSFDAIKAVVFLYLLLGYCNCVYYGSLYWINRFCKLTLGCYEFKVSAAEFKYMVANGLRAPTGVFDALILSLKLIGVGGRKTIKISSVQSKLTDLKCTNVVLLGCLSNMNIAANSREWAYCVDLHNKINLCNDAEAAQEMLLALLAFFLSKNSAFGVDELLDSYFNDSSVLQSVAATYVNLPSYLAYETARQSYEDALANGSPPQLVKQLRHAMNVAKSEFDREASTQRKLDRMAEQAASQMYKEARAVNRKSKVVSAMHSLLFGMLRRLDMSSVDTILSLAKDGVVPLSIIPAVSATKLNIVVSDIESYSKIQREGCVHYAGVIWSVVDIKDNDGKPVHAKEVVTSNVESLAWPLFLNCERIIKLQNNEIIPSKIKQRPIKAEGEGVVADGNALYSNEGGRTFMYAFISDKPDLKVVKWEFDGGSNAIELEPPCKFLVEAPSGPVVKYLYFVRNLNNLRRGAVLGFIGATVRLQAGKQTEQATNSSLLTLCAFAVDPPKTYLDAVKSGHRPVGNCVKMLANGSGNGQAITNGVEASTNQDSYGGASVCLYCRAHVEHPDMDGFCKLRGKYVQVPLGTLDPIRFVLENTVCKVCGCWQANGCTCDRAVIQSVDSGYLNRVRGSSAARLEPLNGSDTHHVFRAFDVYNRDVACISKFLKVNCVRLKNLDKHDAFWIVKKCTKSVMEHEQSIYNLISDCGAVAKHDFFTWKEGRSVYGNVCRQDLTEYTMMDLCYALRNFDENNCETLKKILVVVGACDESYFDNKLWFDPVENEDVHRVYAKLGTIVARAMLKCVKYCDAMVEQGIVGVITLDNQDLNGDFYDFGDFVTSVKGMGVPICTSYYSYMMPVMGMTNCLASECFIKSDIFGEDFRTFDLLAYDFTEHKVNLFNKYFKHWGQTYHPNCEDCHDESCIVHCANFNTLFATTIPITAFGPLCRKCWIDGVPLVTTAGYHFKQLGIVWNKDLNLHSSRLTINELLQFCADPSLLIASSPALVDKRTVCFSVAALGTGMTNQTVKPGHFNREFYDFLRSQGFFEEGSELTLKHFFFAQKGDAAVRDFDYYRYNRTTVLDICQARVVYQIVQCYFGMYEGGCITAKEVIVNNLNKSAGYPFNKFGKAGLYYDSLSYEEQDDLYAYTKRNIIPTMTQLNLKYAISGKDRARTVGGVSLLSTMTTRQYHQKHLKSIVNTRGASVVIGTTKFYGGWDNMLKTLIKDVENPHLMGWDYPKCDRALPNMIRMISAMILGSKHVNCCSSSDRYYRLCNELAQVLTEMVYSNGGFYVKPGGTTSGDATTAYANSVFNIFQATSANVNRLLSVDSNTCNNIEVKQLQRKLYDCCYRSSSVDQSFVEEYFGYLRKHFSMMILSDDGVVCYNSEYAALGYVADLNAFKAVLYYQNNVFMSASKCWIEPDINKGPHEFCSQHTMQIVDKDGTYYLPYPDPSRILSAGVFVDDIVKTDPVILLERYVSLAIDAYPLSKHDNPEYRRVFTVMLDWVKHLYKTLNQGVLDSFSVTLLEDATAKFWDESFYASMYEQSSVLQSAGLCVVCSSQTVLRCGDCIRRPMLCTKCAYDHVVSTSHKFILAITPYVCCSSGCGVSDVTKLYLGGLSYWCVDHKPRLSFPLCSSGNVFGLYKNSATGSPDVDDFNTLATSDWTDVKDYKLANDVKDSLRLFAAETIKAKEESVKSSYACATIHEVVGPKELVLKWEVGKPRPPLSRNSVFTCYHITKNTKFQVGEFTFEKLDYDNDAVSYKSTATTKLVPGMVFVLTSHNVQPLRAPTIINQERYSTLHKLRPAFNIHEDYSNLIPYYQLIGKQKLTTIQGPPGSGKSHCVIGLGLYFPGARIVFTACSHAAVDSLCVKAATAYSSDRCSRIIPQKARIECYDGFKSNNTSAQYLFSTVNALPEVNADICVVDEVSMCTNYDLSVINQRVNYRHIVYVGDPQQLPAPRVMITRGVLVPEDYNVVTRRMCVLKPDIFLHKCYRCPAEIVNTVSEMVYENQFVPVKSESKECFKIYCRGNVQVDNGSSINRRQLEVVRMFLAKNPKWAKAVFISPYNSQNYVAGRVLGLQIQTVDSSQGSEYDYVIYTQTSDTAHASNVNRFNVAITRAKKGILCIMCDRELFDILKFYELKLSDLQVGDGCGLFKDCYKGEDNLPPSHAPTFMSLSDNFKTDKDLAVQIGVNGPVKYEHVISFMGFRFDINVPNQHTLFCTRDFAMRNARGWLGFDVEGAHVIGSNVGTNVPLQLGFSNGVDFVVRPEGCVSTEVGDVIQPVRARAPPGDQFTHLLPLLRKGQPWSVIRRRIVQMCSDYLANLSDTLIFVLWSGGLELTTMRYFVKLGPVQTCDCGKRATCYNSTNHTFSCFRHALGSDYIYNCYCIDIQQWGYTGSLSMNHHEVCNIHRNEHVASGDAAMTRCLAIHDCFVKNVDWSITYPFIANEQAINKSGRLVQSHVMRAVLKLYNPKAIHDVGNPKGIRCVVTDASWYCYDKNPTNTNVKMLEYDYITHGQLDGLCLFWNCNVDMYPEFSVVCRFDTRMRSTLNLEGCNGGSLYVNNHAFHTPAYDKRAFAKLKAMPFFFYDDSECEKLQDAVNYVPLRASNCITRCNVGGAVCSKHCALYHNYVMAYNTFTTAGFTIWVPNSFDMFNLWQTFKNSNVQGLENIAYNVVKKGSFVGVEGELPVAVVNDKVMVRDGVSDNVVFVNNTSLPTNVAFELYAKRKVGLTPPLTILKNLGVVCTSKCVLWDYEASRPLTTFTKDVCKYTDFDGDVCTLFDNSVPGAFERFTVTKNAVLISLTAVKKLTAIKLTYGYLNGVPVFTHEDKPFTWYIYTRKDGAFVEYPDGYFTQGRVISDFQPRSNMEEDFLNMDMGLFISKYGLEDYGFEHVVFGDVSKTTLGGLHLLISQIRLSKIGVLKVEDFVSSSDSTLKSCTVTYVDNPSSKMVCTYVDLLLDDFVNILKSVDLSVVSKVHEVVIDCKVWRWMLWCKDHKVQTFYPQLQSAEWKCGYSMPSIYKIQRMCLEPCNLYNYGSGLKLPDGIMFNVVKYTQLCQYLNSTTMCVPHHMRVLHLGAGSDKGVAPGTAVLRRWLPLDAVIVDNDVNDYVSDADFSYTGDCASMYLTDKFDLVISDMYDGRTKSCDGDNVSKEGFFPYINGVITEKLALGGTVAIKITEFSWNKKLYELIQKFEYWTLFCTSVNTSSSEAFLIGVHFLGDFSTNAIIDGNIMHANYIFWRNSTIMTMSYNSVLDLSKFSCKHKATVVVNLKDSSVTDLVLGLLKNGKLLIRNNGVVCGFSNHLVNSTK.

The 108-residue stretch at 2 to 109 (ASNHISLAFA…ELDLVFGRCG (108 aa)) folds into the CoV Nsp1 globular domain. In terms of domain architecture, CoV Nsp2 N-terminal spans 112–368 (TIPVDQFMCG…TKFKFQLLAN (257 aa)). The 390-residue stretch at 396–785 (ILGLPWFVKK…LDTVTSFIKV (390 aa)) folds into the CoV Nsp2 middle domain. The 122-residue stretch at 776-897 (LDTVTSFIKV…VASCFKKKGG (122 aa)) folds into the CoV Nsp2 C-terminal domain. One can recognise a Ubiquitin-like 1 domain in the interval 898-993 (GVVTISDEVQ…IMVSQWPLSS (96 aa)). The 234-residue stretch at 1069-1302 (AFIEDKPVVV…SCDVKPFLTY (234 aa)) folds into the Peptidase C16 1 domain. Cys1103 serves as the catalytic For PL1-PRO activity. The C4-type 1; degenerate zinc finger occupies 1174–1205 (CGCGPGVRVYENAIFRFTPLKTAFPMGRCLIC). Active-site for PL1-PRO activity residues include His1252 and Asp1265. The region spanning 1303 to 1467 (KNIEFYQGEL…FQTEQPVEPL (165 aa)) is the Macro domain. One can recognise a Ubiquitin-like 2 domain in the interval 1638–1693 (AKPVQVVVTQDQRSFHTVELSTSQTYGQQLGDCVVEDKKVTNLKPVSKDKVVSVVP). A Peptidase C16 2 domain is found at 1699-1965 (KHYGFVDAGI…FLDTMNVASE (267 aa)). The For PL2-PRO activity role is filled by Cys1737. The C4-type 2; degenerate zinc-finger motif lies at 1816 to 1849 (TTCDGTCSTKRVVSTPVVNASVLKVGLDDGNCVH). Catalysis depends on for PL2-PRO activity residues His1902 and Asp1915. Transmembrane regions (helical) follow at residues 1973-1993 (FVSR…AICF) and 2036-2056 (YIKV…LMFM). Residues 1973–2184 (FVSRNIIVLI…MGNIIVVAFI (212 aa)) form an HD1 region. The 3Ecto domain maps to 2052–2116 (ALMFMFIRFT…TRVIWQHLKD (65 aa)). 2 disulfide bridges follow: Cys2068–Cys2094 and Cys2086–Cys2091. The next 3 helical transmembrane spans lie at 2119 to 2139 (IGNI…GFFV), 2141 to 2161 (IGIT…LGYQ), and 2164 to 2184 (VWLL…VAFI). Residues 2190 to 2280 (LFLKHVLFGC…VTKLNVIPTG (91 aa)) are Y1. The CoV Nsp3 Y domain maps to 2190–2530 (LFLKHVLFGC…PTISVANKKG (341 aa)). Positions 2194, 2199, 2204, 2207, 2240, 2243, 2247, and 2250 each coordinate Zn(2+). The tract at residues 2194–2207 (HVLFGCDKPSCIAC) is ZF1. Positions 2240–2250 (CKKHNFFCVDC) are ZF2. Residues 2281-2370 (PATIIIDKVE…LVDSALLASL (90 aa)) are Y2. Positions 2281–2530 (PATIIIDKVE…PTISVANKKG (250 aa)) are coV-Y. Positions 2371-2428 (NVDFSANLHKAFVEVLSNSFGKDLSNCSNMNECRESLGLSDVPEEEFSAAVSEAHRYD) are Y3. The segment at 2429–2530 (VLISDVSFNN…PTISVANKKG (102 aa)) is Y4. The next 7 membrane-spanning stretches (helical) occupy residues 2543–2563 (FFWH…LLDF), 2634–2654 (VPAG…TIFG), 2669–2689 (DSCI…RNVY), 2769–2789 (GSDY…IGMF), 2802–2822 (ILLN…FTKF), 2829–2849 (MSFG…SYVV), and 2878–2898 (VGFA…AYLI). The HD2 stretch occupies residues 2543 to 2898 (FFWHLCVLIV…PWWVVLAYLI (356 aa)). Residues 2917–3012 (LFEGDKFVGS…PTVSYNSTLQ (96 aa)) form the Nsp4C domain. The Peptidase C30 domain occupies 3013-3314 (AGLRKMAQPS…VKQMYGVTLQ (302 aa)). Residues His3053 and Cys3156 each act as for 3CL-PRO activity in the active site. 7 helical membrane-spanning segments follow: residues 3351–3371 (GYIT…MLLV), 3376–3396 (LFLQ…NIFK), 3414–3434 (FGGF…VMGL), 3443–3463 (PNKI…YYYS), 3466–3486 (VLGL…IGTA), 3488–3507 (YKLA…FDAI), and 3511–3531 (VFLY…LYWI). The tract at residues 3351 to 3531 (GYITPVFLAI…CVYYGSLYWI (181 aa)) is HD3. A RdRp Nsp7 cofactor domain is found at 3591-3673 (SKLTDLKCTN…SYFNDSSVLQ (83 aa)). Positions 3674–3868 (SVAATYVNLP…LNCERIIKLQ (195 aa)) constitute a RdRp Nsp8 cofactor domain. A Nsp9 ssRNA-binding domain is found at 3869–3976 (NNEIIPSKIK…GFIGATVRLQ (108 aa)). An ExoN/MTase coactivator domain is found at 3977–4115 (AGKQTEQATN…DRAVIQSVDS (139 aa)). Cys4050, Cys4053, His4059, Cys4066, Cys4092, Cys4095, Cys4103, and Cys4105 together coordinate Zn(2+). 2 zinc fingers span residues 4050–4066 (CLYC…DGFC) and 4092–4105 (CKVC…GCTC). The region spanning 4117 to 4366 (YLNRVRGSSA…ASECFIKSDI (250 aa)) is the NiRAN domain. In terms of domain architecture, Nsp12 Interface spans 4372-4470 (RTFDLLAYDF…WNKDLNLHSS (99 aa)). His4401, Cys4407, Cys4412, Cys4416, and Cys4593 together coordinate Zn(2+). In terms of domain architecture, Nsp12 RNA-dependent RNA polymerase spans 4471 to 5038 (RLTINELLQF…SMYEQSSVLQ (568 aa)). Residues 4473 to 4687 (TINELLQFCA…HQKHLKSIVN (215 aa)) are rdRp Fingers N-ter. The rdRp Palm N-ter stretch occupies residues 4688–4726 (TRGASVVIGTTKFYGGWDNMLKTLIKDVENPHLMGWDYP). Residues 4718-4880 (PHLMGWDYPK…CYNSEYAALG (163 aa)) enclose the RdRp catalytic domain. The rdRp Fingers C-ter stretch occupies residues 4727–4785 (KCDRALPNMIRMISAMILGSKHVNCCSSSDRYYRLCNELAQVLTEMVYSNGGFYVKPGG). Residues His4748, Cys4751, and Cys4752 each coordinate Zn(2+). The interval 4786–4921 (TTSGDATTAY…NKGPHEFCSQ (136 aa)) is rdRp Palm C-ter. Catalysis depends on residues Ser4865, Asp4866, and Asp4867. A rdRp Thumb region spans residues 4922 to 5038 (HTMQIVDKDG…SMYEQSSVLQ (117 aa)). The CV ZBD domain occupies 5039 to 5151 (SAGLCVVCSS…DDFNTLATSD (113 aa)). 12 residues coordinate Zn(2+): Cys5043, Cys5046, Cys5054, Cys5057, Cys5064, Cys5067, His5071, His5077, Cys5088, Cys5093, Cys5110, and His5113. The 182-residue stretch at 5296-5477 (NIHEDYSNLI…MCVLKPDIFL (182 aa)) folds into the (+)RNA virus helicase ATP-binding domain. An ATP-binding site is contributed by 5321–5328 (GPPGSGKS). The (+)RNA virus helicase C-terminal domain occupies 5478-5647 (HKCYRCPAEI…DGCGLFKDCY (170 aa)). Residues 5707–5921 (LFCTRDFAMR…RCLAIHDCFV (215 aa)) enclose the ExoN domain. Residues Asp5725, Glu5727, and Glu5826 contribute to the active site. Positions 5842, 5844, 5860, 5863, 5891, 5895, and 5898 each coordinate Zn(2+). Catalysis depends on residues His5902 and Asp5907. A Zn(2+)-binding site is contributed by Cys5913. The N7-MTase domain occupies 5930–6151 (YPFIANEQAI…NLWQTFKNSN (222 aa)). 5965–5971 (DVGNPKG) contributes to the S-adenosyl-L-methionine binding site. Positions 6042–6056 (CNGGSLYVNNHAFHT) are gpppA-binding. Cys6080, Cys6097, Cys6108, and His6111 together coordinate Zn(2+). In terms of domain architecture, Nsp15 N-terminal oligomerization spans 6154-6214 (GLENIAYNVV…NVAFELYAKR (61 aa)). The region spanning 6215 to 6332 (KVGLTPPLTI…IYTRKDGAFV (118 aa)) is the AV-Nsp11N/CoV-Nsp15M domain. The NendoU domain maps to 6349 to 6489 (QPRSNMEEDF…KDHKVQTFYP (141 aa)). Active-site residues include His6379, His6394, Lys6435, Lys6537, Asp6621, Lys6661, and Glu6694. A Nidovirus-type SAM-dependent 2'-O-MTase domain is found at 6493–6789 (SAEWKCGYSM…VVCGFSNHLV (297 aa)).

The protein belongs to the coronaviruses polyprotein 1ab family. 3CL-PRO exists as monomer and homodimer. Eight copies of nsp7 and eight copies of nsp8 assemble to form a heterohexadecamer. Nsp9 is a dimer. Nsp10 forms a dodecamer. The cofactor is Mn(2+). Post-translationally, specific enzymatic cleavages in vivo by its own proteases yield mature proteins. 3CL-PRO and PL-PRO proteinases are autocatalytically processed.

Its subcellular location is the host membrane. It is found in the host cytoplasm. It localises to the host perinuclear region. The protein localises to the host endoplasmic reticulum-Golgi intermediate compartment. The catalysed reaction is Thiol-dependent hydrolysis of ester, thioester, amide, peptide and isopeptide bonds formed by the C-terminal Gly of ubiquitin (a 76-residue protein attached to proteins as an intracellular targeting signal).. It carries out the reaction RNA(n) + a ribonucleoside 5'-triphosphate = RNA(n+1) + diphosphate. It catalyses the reaction ATP + H2O = ADP + phosphate + H(+). The enzyme catalyses a 5'-end diphospho-ribonucleoside in mRNA + GTP + H(+) = a 5'-end (5'-triphosphoguanosine)-ribonucleoside in mRNA + diphosphate. The catalysed reaction is a 5'-end (N(7)-methyl 5'-triphosphoguanosine)-ribonucleoside in mRNA + S-adenosyl-L-methionine = a 5'-end (N(7)-methyl 5'-triphosphoguanosine)-(2'-O-methyl-ribonucleoside) in mRNA + S-adenosyl-L-homocysteine + H(+). It carries out the reaction uridylyl-uridylyl-ribonucleotide-RNA = a 3'-end uridylyl-2',3'-cyclophospho-uridine-RNA + a 5'-end dephospho-ribonucleoside-RNA. Functionally, the replicase polyprotein of coronaviruses is a multifunctional protein: it contains the activities necessary for the transcription of negative stranded RNA, leader RNA, subgenomic mRNAs and progeny virion RNA as well as proteinases responsible for the cleavage of the polyprotein into functional products. Its function is as follows. The papain-like proteinase 1 (PLP1) and papain-like proteinase 2 (PLP2) are responsible for the cleavages located at the N-terminus of the replicase polyprotein. In addition, PLP2 possesses a deubiquitinating/deISGylating activity and processes both 'Lys-48'- and 'Lys-63'-linked polyubiquitin chains from cellular substrates. PLP2 also antagonizes innate immune induction of type I interferon by blocking the nuclear translocation of host IRF-3. In terms of biological role, responsible for the majority of cleavages as it cleaves the C-terminus of replicase polyprotein at 11 sites. Recognizes substrates containing the core sequence [ILMVF]-Q-|-[SGACN]. Inhibited by the substrate-analog Cbz-Val-Asn-Ser-Thr-Leu-Gln-CMK. Also contains an ADP-ribose-1''-phosphate (ADRP)-binding function. The helicase which contains a zinc finger structure displays RNA and DNA duplex-unwinding activities with 5' to 3' polarity. ATPase activity is strongly stimulated by poly(U), poly(dT), poly(C), poly(dA), but not by poly(G). Functionally, the exoribonuclease acts on both ssRNA and dsRNA in a 3' to 5' direction. Its function is as follows. Nsp7-nsp8 hexadecamer may possibly confer processivity to the polymerase, maybe by binding to dsRNA or by producing primers utilized by the latter. In terms of biological role, forms a primer, NSP9-pU, which is utilized by the polymerase for the initiation of RNA chains. Interacts with ribosome signal recognition particle RNA (SRP). Together with NSP8, suppress protein integration into the cell membrane, thereby disrupting host immune defenses. RNA-directed RNA polymerase that catalyzes the transcription of viral genomic and subgenomic RNAs. Acts in complex with nsp7 and nsp8 to transcribe both the minus and positive strands of genomic RNA. The kinase-like NiRAN domain of NSP12 attaches one or more nucleotides to the amino terminus of NSP9, forming a covalent RNA-protein intermediate that serves as transcription/replication primer. Subgenomic RNAs (sgRNAs) are formed by discontinuous transcription: The polymerase has the ability to pause at transcription-regulating sequences (TRS) and jump to the leader TRS, resulting in a major deletion. This creates a series of subgenomic RNAs that are replicated, transcribed and translated. In addition, Nsp12 is a subunit of the viral RNA capping enzyme that catalyzes the RNA guanylyltransferase reaction for genomic and sub-genomic RNAs. Subsequently, the NiRAN domain transfers RNA to GDP, and forms the core cap structure GpppA-RNA. Functionally, plays a role in viral transcription/replication and prevents the simultaneous activation of host cell dsRNA sensors, such as MDA5/IFIH1, OAS, and PKR. Acts by degrading the 5'-polyuridines generated during replication of the poly(A) region of viral genomic and subgenomic RNAs. Catalyzes a two-step reaction in which a 2'3'-cyclic phosphate (2'3'-cP) is first generated by 2'-O transesterification, which is then hydrolyzed to a 3'-phosphate (3'-P). If not degraded, poly(U) RNA would hybridize with poly(A) RNA tails and activate host dsRNA sensors. The polypeptide is Replicase polyprotein 1ab (rep) (Bat coronavirus 512/2005 (BtCoV)).